Consider the following 615-residue polypeptide: Fibrinogen alpha chain (615 aa).

The N-terminal stretch at 1-19 is a signal peptide; it reads MFSVRDLCLVLSLVGAIKT. Residues 71–602 are a coiled coil; the sequence is CRMKGLIDEV…GHTKARPARG (532 aa). The tract at residues 267–427 is disordered; that stretch reads FGGDGHARGD…TKQEFHTGKL (161 aa). The span at 293–302 shows a compositional bias: polar residues; the sequence is GTSSIGNVNP. Thr-325 carries an O-linked (GalNAc...) threonine glycan. Residues 373-396 show a composition bias toward low complexity; it reads GSAGTWNTGSSGSSSFRPDSSGHG. A disulfide bond links Cys-455 and Cys-485. Residues 530–615 are disordered; that stretch reads EFAALGESGS…SPLGEPSLTP (86 aa). Residues 537–549 show a composition bias toward low complexity; that stretch reads SGSSSSKTSTHSK. Residues 550–560 are compositionally biased toward polar residues; that stretch reads QFVSSSTTVNR. The span at 591–601 shows a compositional bias: basic residues; it reads QKGHTKARPAR.

In terms of assembly, heterohexamer; disulfide linked. Contains 2 sets of 3 non-identical chains (alpha, beta and gamma). The 2 heterotrimers are in head to head conformation with the N-termini in a small central domain. Conversion of fibrinogen to fibrin is triggered by thrombin, which cleaves fibrinopeptides A and B from alpha and beta chains, and thus exposes the N-terminal polymerization sites responsible for the formation of the soft clot. The soft clot is converted into the hard clot by factor XIIIA which catalyzes the epsilon-(gamma-glutamyl)lysine cross-linking between gamma chains (stronger) and between alpha chains (weaker) of different monomers. Post-translationally, forms F13A-mediated cross-links between a glutamine and the epsilon-amino group of a lysine residue, forming fibronectin-fibrinogen heteropolymers.

The protein localises to the secreted. In terms of biological role, cleaved by the protease thrombin to yield monomers which, together with fibrinogen beta (FGB) and fibrinogen gamma (FGG), polymerize to form an insoluble fibrin matrix. Fibrin has a major function in hemostasis as one of the primary components of blood clots. In addition, functions during the early stages of wound repair to stabilize the lesion and guide cell migration during re-epithelialization. Was originally thought to be essential for platelet aggregation, based on in vitro studies using anticoagulated blood. However, subsequent studies have shown that it is not absolutely required for thrombus formation in vivo. Enhances expression of SELP in activated platelets via an ITGB3-dependent pathway. Maternal fibrinogen is essential for successful pregnancy. Fibrin deposition is also associated with infection, where it protects against IFNG-mediated hemorrhage. May also facilitate the immune response via both innate and T-cell mediated pathways. This chain is Fibrinogen alpha chain (FGA), found in Bos taurus (Bovine).